A 227-amino-acid chain; its full sequence is Cysteine-rich hydrophobic domain-containing protein 1 (227 aa).

Residues 1–84 are disordered; that stretch reads MSILLPNMAE…PPRVVSEEHL (84 aa). Over residues 13-23 the composition is skewed to acidic residues; it reads TISELEEEEEA. Residues 24-44 are compositionally biased toward low complexity; sequence ATSSSSPSSSPSSSSSSSVSG. Over residues 45–72 the composition is skewed to acidic residues; that stretch reads PDEDEEDEEEEEEEDEEEEDEEEEEEEV. Positions 46–73 form a coiled coil; it reads DEDEEDEEEEEEEDEEEEDEEEEEEEVP.

This sequence belongs to the CHIC family. Post-translationally, palmitoylated. Expressed moderately in the brain.

Its subcellular location is the cell membrane. It localises to the cytoplasmic vesicle. The polypeptide is Cysteine-rich hydrophobic domain-containing protein 1 (Chic1) (Mus musculus (Mouse)).